The sequence spans 256 residues: MNNIWWQSKGQGNVHLVLLHGWGLNAEVWRCIDEELSSHFTLHLVDLPGFGRSRGFGALSLADMAEVVLRQAPDKAIWLGWSLGGLVASQIALTHPERVQALVTVASSPCFSARDEWPGIKPDVLAGFQQQLSDDFQRTVERFLALQTMGTETARQDARALKKTVLALPMPEVDVLNGGLEILKMVDLRQPLQNVSMPFLRLYGYLDGLVPRKVVPMLDKLWPHSESYIFAKAAHAPFISHPAEFCRMLVVLKQRV.

The 228-residue stretch at 15-242 folds into the AB hydrolase-1 domain; the sequence is HLVLLHGWGL…AAHAPFISHP (228 aa). Substrate is bound by residues Trp22, 82–83, and 143–147; these read SL and FLALQ. Ser82 acts as the Nucleophile in catalysis. Catalysis depends on residues Asp207 and His235. Substrate is bound at residue His235.

The protein belongs to the AB hydrolase superfamily. Carboxylesterase BioH family. In terms of assembly, monomer.

The protein localises to the cytoplasm. It catalyses the reaction 6-carboxyhexanoyl-[ACP] methyl ester + H2O = 6-carboxyhexanoyl-[ACP] + methanol + H(+). The protein operates within cofactor biosynthesis; biotin biosynthesis. In terms of biological role, the physiological role of BioH is to remove the methyl group introduced by BioC when the pimeloyl moiety is complete. It allows to synthesize pimeloyl-ACP via the fatty acid synthetic pathway through the hydrolysis of the ester bonds of pimeloyl-ACP esters. The sequence is that of Pimeloyl-[acyl-carrier protein] methyl ester esterase from Escherichia coli O127:H6 (strain E2348/69 / EPEC).